The sequence spans 460 residues: GTPase Der (460 aa).

2 EngA-type G domains span residues 3–167 and 189–364; these read FTFA…PEPD and IRVA…AVWN. GTP is bound by residues 9–16, 56–60, 119–122, 195–202, 242–246, and 307–310; these read GRPNVGKS, DTAGL, NKSE, GRPNAGKS, and NKWD. The KH-like domain maps to 365–449; that stretch reads TRVPTAALNR…PVRIMLREKA (85 aa).

Belongs to the TRAFAC class TrmE-Era-EngA-EngB-Septin-like GTPase superfamily. EngA (Der) GTPase family. In terms of assembly, associates with the 50S ribosomal subunit.

Its function is as follows. GTPase that plays an essential role in the late steps of ribosome biogenesis. This chain is GTPase Der, found in Rhodopseudomonas palustris (strain BisB5).